The primary structure comprises 397 residues: Cell division protein DivIB (397 aa).

The Cytoplasmic portion of the chain corresponds to 1–138 (MTTKDKGDQK…RIERIHLYRA (138 aa)). Basic and acidic residues predominate over residues 24 to 37 (QEYLEKKSQEKASE). The segment at 24–115 (QEYLEKKSQE…DRTEKFIGQA (92 aa)) is disordered. A compositionally biased stretch (acidic residues) spans 74–103 (ASDDDETNESEESEDVEEPEEENIEESSDV). Residues 139–159 (LPVLVISSLLILLSLYFITPL) traverse the membrane as a helical segment. Positions 160–231 (GSLKNLVVTG…ITFKIQVTEY (72 aa)) constitute a POTRA domain. Residues 160–397 (GSLKNLVVTG…PSDVTDETNN (238 aa)) are Extracellular-facing. The disordered stretch occupies residues 360–397 (LVQKEEQDQEQEKEESSEETVPGETEAAPSDVTDETNN). Acidic residues predominate over residues 366 to 377 (QDQEQEKEESSE).

It belongs to the FtsQ/DivIB family. DivIB subfamily.

The protein resides in the cell membrane. In terms of biological role, cell division protein that may be involved in stabilizing or promoting the assembly of the division complex. This Streptococcus gordonii (strain Challis / ATCC 35105 / BCRC 15272 / CH1 / DL1 / V288) protein is Cell division protein DivIB.